The sequence spans 163 residues: Nucleotide-binding protein CJJ81176_0398 (163 aa).

This sequence belongs to the YajQ family.

Nucleotide-binding protein. This is Nucleotide-binding protein CJJ81176_0398 from Campylobacter jejuni subsp. jejuni serotype O:23/36 (strain 81-176).